A 345-amino-acid chain; its full sequence is Fructose-bisphosphate aldolase, plasmid (345 aa).

Serine 50 is a D-glyceraldehyde 3-phosphate binding site. Residue aspartate 83 is the Proton donor of the active site. The Zn(2+) site is built by histidine 84, aspartate 105, glutamate 142, and histidine 198. Glycine 199 contacts dihydroxyacetone phosphate. Residue histidine 232 coordinates Zn(2+). Dihydroxyacetone phosphate is bound by residues 233 to 235 and 275 to 278; these read GSS and NIDT.

The protein belongs to the class II fructose-bisphosphate aldolase family. Homodimer. Requires Zn(2+) as cofactor.

It carries out the reaction beta-D-fructose 1,6-bisphosphate = D-glyceraldehyde 3-phosphate + dihydroxyacetone phosphate. It functions in the pathway carbohydrate biosynthesis; Calvin cycle. The protein operates within carbohydrate degradation; glycolysis; D-glyceraldehyde 3-phosphate and glycerone phosphate from D-glucose: step 4/4. Catalyzes the aldol condensation of dihydroxyacetone phosphate (DHAP or glycerone-phosphate) with glyceraldehyde 3-phosphate (G3P) to form fructose 1,6-bisphosphate (FBP) in gluconeogenesis and the reverse reaction in glycolysis. This Cupriavidus necator (strain ATCC 17699 / DSM 428 / KCTC 22496 / NCIMB 10442 / H16 / Stanier 337) (Ralstonia eutropha) protein is Fructose-bisphosphate aldolase, plasmid (cbbAP).